The primary structure comprises 133 residues: Holo-[acyl-carrier-protein] synthase (133 aa).

Asp8 and Glu56 together coordinate Mg(2+).

It belongs to the P-Pant transferase superfamily. AcpS family. Mg(2+) serves as cofactor.

It is found in the cytoplasm. The enzyme catalyses apo-[ACP] + CoA = holo-[ACP] + adenosine 3',5'-bisphosphate + H(+). Transfers the 4'-phosphopantetheine moiety from coenzyme A to a Ser of acyl-carrier-protein. The chain is Holo-[acyl-carrier-protein] synthase from Clostridium perfringens (strain SM101 / Type A).